Here is a 215-residue protein sequence, read N- to C-terminus: 3-isopropylmalate dehydratase small subunit (215 aa).

Belongs to the LeuD family. LeuD type 1 subfamily. In terms of assembly, heterodimer of LeuC and LeuD.

It catalyses the reaction (2R,3S)-3-isopropylmalate = (2S)-2-isopropylmalate. It functions in the pathway amino-acid biosynthesis; L-leucine biosynthesis; L-leucine from 3-methyl-2-oxobutanoate: step 2/4. Its function is as follows. Catalyzes the isomerization between 2-isopropylmalate and 3-isopropylmalate, via the formation of 2-isopropylmaleate. The polypeptide is 3-isopropylmalate dehydratase small subunit (Xylella fastidiosa (strain 9a5c)).